Here is an 827-residue protein sequence, read N- to C-terminus: DNA ligase (827 aa).

Residues Asp45 to Asp49, Ser94 to Leu95, and Glu128 each bind NAD(+). The N6-AMP-lysine intermediate role is filled by Lys130. NAD(+)-binding residues include Arg151, Glu188, Lys304, and Lys328. 4 residues coordinate Zn(2+): Cys451, Cys454, Cys475, and Cys481. The 80-residue stretch at Ala748–Ala827 folds into the BRCT domain.

Belongs to the NAD-dependent DNA ligase family. LigA subfamily. Mg(2+) serves as cofactor. Requires Mn(2+) as cofactor.

It carries out the reaction NAD(+) + (deoxyribonucleotide)n-3'-hydroxyl + 5'-phospho-(deoxyribonucleotide)m = (deoxyribonucleotide)n+m + AMP + beta-nicotinamide D-nucleotide.. In terms of biological role, DNA ligase that catalyzes the formation of phosphodiester linkages between 5'-phosphoryl and 3'-hydroxyl groups in double-stranded DNA using NAD as a coenzyme and as the energy source for the reaction. It is essential for DNA replication and repair of damaged DNA. The polypeptide is DNA ligase (Methylobacterium sp. (strain 4-46)).